Consider the following 391-residue polypeptide: Casein kinase II subunit alpha 3 (391 aa).

The 286-residue stretch at 39–324 (YQLVRKLGRG…AREAMEHPYF (286 aa)) folds into the Protein kinase domain. ATP-binding positions include 45-53 (LGRGKYSEV) and Lys68. Asp156 (proton acceptor) is an active-site residue.

Belongs to the protein kinase superfamily. Ser/Thr protein kinase family. CK2 subfamily. As to quaternary structure, heterotetramer composed of two catalytic subunits (alpha chain and/or alpha' chain) and two regulatory subunits (beta chains). Interacts with PML. As to expression, detected in blood platelets and megakaryocyte cell lines. Poorly expressed in lung. Highly expressed in lung tumor tissues.

It catalyses the reaction L-seryl-[protein] + ATP = O-phospho-L-seryl-[protein] + ADP + H(+). The catalysed reaction is L-threonyl-[protein] + ATP = O-phospho-L-threonyl-[protein] + ADP + H(+). Its function is as follows. Probable catalytic subunit of a constitutively active serine/threonine-protein kinase complex that phosphorylates a large number of substrates containing acidic residues C-terminal to the phosphorylated serine or threonine. Amplification-dependent oncogene; promotes cell proliferation and tumorigenesis by down-regulating expression of the tumor suppressor protein, PML. May play a role in the pathogenesis of the lung cancer development and progression. This Homo sapiens (Human) protein is Casein kinase II subunit alpha 3 (CSNK2A3).